The chain runs to 312 residues: ADIPOR-like receptor IZH4 (312 aa).

The segment at 1 to 38 (MVSLTTIEQSPVKCETTTEKESNDTRGTDSNENAETKE) is disordered. Residues 1-64 (MVSLTTIEQS…YKNKSSRNES (64 aa)) are Cytoplasmic-facing. A compositionally biased stretch (basic and acidic residues) spans 16–38 (TTTEKESNDTRGTDSNENAETKE). Residues 65–85 (LVALIYLLGSMLSFCLLIFFT) traverse the membrane as a helical segment. The Lumenal portion of the chain corresponds to 86–101 (DFYLIPLFPTTTTMTD). The helical transmembrane segment at 102-122 (YIVFNFYLLNVFVFCMVHFIY) threads the bilayer. The Cytoplasmic segment spans residues 123 to 141 (HFVKNISLQQHLEHWQKFS). A helical membrane pass occupies residues 142-162 (YLSNINLLISSQITILYYLFY). Residues 163 to 165 (DYV) lie on the Lumenal side of the membrane. Residues 166–186 (FFFKIFTLLMNFIGLVAYFFI) traverse the membrane as a helical segment. Over 187–201 (LTDKLISSKRFNKTV) the chain is Cytoplasmic. A helical transmembrane segment spans residues 202–222 (FFISVSVVCCSLPLLTAIITF). Residues 223–231 (DGLENLKER) are Lumenal-facing. A helical transmembrane segment spans residues 232 to 252 (IKVNAITWELVALVAASIIYV). The Cytoplasmic segment spans residues 253–277 (TRFPESLFRRNKKEEGWNHSEYLFH). The helical transmembrane segment at 278-298 (LLISGTAFYHFFILIQSYILM) threads the bilayer. Topologically, residues 299-312 (HSSLNQPELINFKS) are lumenal.

This sequence belongs to the ADIPOR family.

It is found in the endoplasmic reticulum membrane. In terms of biological role, ADIPOR-like receptor involved in zinc metabolism either by altering membrane sterol content or by directly altering cellular zinc levels. This chain is ADIPOR-like receptor IZH4 (IZH4), found in Saccharomyces cerevisiae (strain ATCC 204508 / S288c) (Baker's yeast).